The sequence spans 767 residues: 5-methyltetrahydropteroyltriglutamate--homocysteine methyltransferase (767 aa).

The 5-methyltetrahydropteroyltri-L-glutamate site is built by Lys-19 and Asn-126. L-homocysteine contacts are provided by residues 446–448 (IGS) and Glu-499. Residues 446–448 (IGS) and Glu-499 contribute to the L-methionine site. 5-methyltetrahydropteroyltri-L-glutamate-binding positions include Asp-504, Tyr-527, 530-531 (RY), and Trp-576. Asp-614 serves as a coordination point for L-homocysteine. L-methionine is bound at residue Asp-614. Residues His-657, Cys-659, and Glu-679 each contribute to the Zn(2+) site. The active-site Proton donor is the His-707. Cys-739 lines the Zn(2+) pocket.

Belongs to the vitamin-B12 independent methionine synthase family. It depends on Zn(2+) as a cofactor.

The catalysed reaction is 5-methyltetrahydropteroyltri-L-glutamate + L-homocysteine = tetrahydropteroyltri-L-glutamate + L-methionine. Its pathway is amino-acid biosynthesis; L-methionine biosynthesis via de novo pathway; L-methionine from L-homocysteine (MetE route): step 1/1. Inhibited weakly by methotrexate. Functionally, catalyzes the transfer of a methyl group from 5-methyltetrahydrofolate to homocysteine resulting in methionine formation. The sequence is that of 5-methyltetrahydropteroyltriglutamate--homocysteine methyltransferase from Candida albicans (strain SC5314 / ATCC MYA-2876) (Yeast).